Reading from the N-terminus, the 436-residue chain is Magnesium transporter MRS2-B (436 aa).

2 stretches are compositionally biased toward low complexity: residues 1 to 14 and 29 to 54; these read MSAA…GDSA and VASV…FPGG. Residues 1–60 form a disordered region; that stretch reads MSAAAASSAAGDSAKQPLLHHQRGNPPHVASVSSPSLPSAPPGALAGGRRFPGGLDVPNL. Residues 176–242 adopt a coiled-coil conformation; it reads LALEAACSFL…RDEIEQLMDD (67 aa). The next 2 helical transmembrane spans lie at 372 to 392 and 408 to 428; these read LLLT…GIFG and WVLI…LWFF. The Required for magnesium transport activity motif lies at 392 to 394; it reads GMN.

It belongs to the CorA metal ion transporter (MIT) (TC 1.A.35.5) family.

It is found in the membrane. Its function is as follows. Magnesium transporter that may mediate the influx of magnesium. This chain is Magnesium transporter MRS2-B (MRS2-B), found in Oryza sativa subsp. indica (Rice).